The primary structure comprises 314 residues: Ribosomal RNA small subunit methyltransferase H (314 aa).

S-adenosyl-L-methionine contacts are provided by residues 34 to 36 (GGH), D54, F83, D104, and Q111.

It belongs to the methyltransferase superfamily. RsmH family.

It localises to the cytoplasm. The enzyme catalyses cytidine(1402) in 16S rRNA + S-adenosyl-L-methionine = N(4)-methylcytidine(1402) in 16S rRNA + S-adenosyl-L-homocysteine + H(+). Specifically methylates the N4 position of cytidine in position 1402 (C1402) of 16S rRNA. The polypeptide is Ribosomal RNA small subunit methyltransferase H (Ligilactobacillus salivarius (strain UCC118) (Lactobacillus salivarius)).